Here is a 545-residue protein sequence, read N- to C-terminus: Chaperonin GroEL (545 aa).

Residues 29 to 32 (TLGP), lysine 50, 86 to 90 (DGTTT), glycine 415, and aspartate 495 contribute to the ATP site.

This sequence belongs to the chaperonin (HSP60) family. In terms of assembly, forms a cylinder of 14 subunits composed of two heptameric rings stacked back-to-back. Interacts with the co-chaperonin GroES.

It localises to the cytoplasm. The catalysed reaction is ATP + H2O + a folded polypeptide = ADP + phosphate + an unfolded polypeptide.. In terms of biological role, together with its co-chaperonin GroES, plays an essential role in assisting protein folding. The GroEL-GroES system forms a nano-cage that allows encapsulation of the non-native substrate proteins and provides a physical environment optimized to promote and accelerate protein folding. In Bacteroides fragilis (strain ATCC 25285 / DSM 2151 / CCUG 4856 / JCM 11019 / LMG 10263 / NCTC 9343 / Onslow / VPI 2553 / EN-2), this protein is Chaperonin GroEL.